The sequence spans 823 residues: Bifunctional enzyme flvA (823 aa).

A pyridoxal 5'-phosphate-dependent lyase region spans residues 56–535; that stretch reads TAKFEMALMP…QRLYDAKFYI (480 aa). N6-(pyridoxal phosphate)lysine is present on K331. The interval 573 to 823 is alpha-ketoglutarate-dependent oxygenase; it reads DFDALQQVSH…TLPMNVPLWL (251 aa). Fe cation-binding residues include H703 and D705.

The protein in the N-terminal section; belongs to the trans-sulfuration enzymes family. In the C-terminal section; belongs to the iron/ascorbate-dependent oxidoreductase family. Pyridoxal 5'-phosphate is required as a cofactor. Fe(2+) serves as cofactor.

The catalysed reaction is O-acetyl-L-homoserine + 3-methyl-2-oxobutanoate = (6S)-6-amino-3,3-dimethyl-2-oxoheptanedioate + acetate + H(+). It carries out the reaction (6S)-3,3-dimethylpiperidine-2,6-dicarboxylate + 2-oxoglutarate + AH2 + O2 + H(+) = (2S)-5,5-dimethylpiperidine-2-carboxylate + succinate + A + 2 CO2 + H2O. The protein operates within secondary metabolite biosynthesis; terpenoid biosynthesis. Its function is as follows. Bifunctional enzyme; part of the gene cluster that mediates the biosynthesis of flavunoidine, an alkaloidal terpenoid with a tetracyclic cage-like core connected to dimethylcadaverine via a C-N bond and acylated with 5,5-dimethyl-L-pipecolate. The tetracyclic core is synthesized by the terpene cyclase flvE and the cytochrome P450 monooxygenase flvD. The terpene cyclase flvE catalyzes the cyclization of farnesyl pyrophosphate (FPP) to form (1R,4R,5S)-(+)-acoradiene and the cytochrome P450 monooxygenase flvD is then responsible for oxidative conversion of (1R,4R,5S)-(+)-acoradiene into the tetracyclic cage present in the final product flavunoidine. In parallel, the N-methyltransferase flvH dimethylates L-lysine to give N,N-dimethyl-L-Lysin which is decarboxylated by flvG to afford dimethylcadaverine. The terpene cyclase-like protein flvF is the enzyme that attaches the dimethylcadaverine precusor at the C-7 of the tetracyclic cage to yield pre-flavunoidine. The cytochrome monooxygenase flvC hydroxylates the C-10 position of pre-flavunoidine whereas the NRPS flvI acylates the terpenoid core at the hydroxylated C-10 with dimethylpipecolate to yield final flavunoidine. The bifunctional enzyme flvA and the dehydrogenase flvB are responsible for the synthesis of the dimethylpipecolate precursor. The PLP-dependent lyase domain of flvA might use L-O-acetyl-homoserine and alpha-keto-isovalerate to form an intermediary ketone that can cyclize intramolecularly to yield an imine. The imine can be reduced by flvB to yield the 6-carboxylated pipecolate. The C-terminal alpha-KG-dependent oxygenase domain of flvA is then proposed to catalyze the decarboxylation to yield dimethylpipecolate. The sequence is that of Bifunctional enzyme flvA from Aspergillus flavus (strain ATCC 200026 / FGSC A1120 / IAM 13836 / NRRL 3357 / JCM 12722 / SRRC 167).